A 173-amino-acid chain; its full sequence is Alpha-crystallin A chain (173 aa).

At methionine 1 the chain carries N-acetylmethionine. Residues 1 to 63 (MDIAIQHPWF…RSVLDSGVSE (63 aa)) are required for complex formation with BFSP1 and BFSP2. A Deamidated glutamine; partial modification is found at glutamine 6. Serine 45 carries the post-translational modification Phosphoserine. Glutamine 50 is subject to Deamidated glutamine; partial. A sHSP domain is found at 52-162 (LFRSVLDSGV…GHSERAIPVS (111 aa)). At lysine 70 the chain carries N6-acetyllysine. Glutamine 90 is modified (deamidated glutamine; partial). N6-acetyllysine is present on lysine 99. A Zn(2+)-binding site is contributed by histidine 100. Asparagine 101 bears the Deamidated asparagine; partial mark. Residues glutamate 102 and histidine 107 each contribute to the Zn(2+) site. Position 122 is a phosphoserine (serine 122). Residue asparagine 123 is modified to Deamidated asparagine; partial. The disordered stretch occupies residues 144 to 173 (PKIPSGMDAGHSERAIPVSREEKPSSAPSS). A compositionally biased stretch (basic and acidic residues) spans 153–167 (GHSERAIPVSREEKP). Histidine 154 lines the Zn(2+) pocket. O-linked (GlcNAc) serine glycosylation occurs at serine 162.

The protein belongs to the small heat shock protein (HSP20) family. In terms of assembly, heteromer composed of three CRYAA and one CRYAB subunits. Inter-subunit bridging via zinc ions enhances stability, which is crucial as there is no protein turn over in the lens. Can also form homodimers and homotetramers (dimers of dimers) which serve as the building blocks of homooligomers. Within homooligomers, the zinc-binding motif is created from residues of 3 different molecules. His-100 and Glu-102 from one molecule are ligands of the zinc ion, and His-107 and His-154 residues from additional molecules complete the site with tetrahedral coordination geometry. Part of a complex required for lens intermediate filament formation composed of BFSP1, BFSP2 and CRYAA. Acetylation at Lys-70 may increase chaperone activity. In terms of processing, undergoes age-dependent proteolytical cleavage at the C-terminus.

The protein localises to the cytoplasm. Its subcellular location is the nucleus. In terms of biological role, contributes to the transparency and refractive index of the lens. Acts as a chaperone, preventing aggregation of various proteins under a wide range of stress conditions. Required for the correct formation of lens intermediate filaments as part of a complex composed of BFSP1, BFSP2 and CRYAA. This chain is Alpha-crystallin A chain (CRYAA), found in Ceratotherium simum (White rhinoceros).